A 679-amino-acid chain; its full sequence is PHD finger protein PERSISTENT TAPETAL CELL 1 (679 aa).

The PHD-type zinc finger occupies 620-670; it reads VVDCACGAVDDDGERMACCDICEAWQHTRCAGIADTEDAPHVFLCSRCDND.

Probable transcriptional activator required for tapetal programmed cell death (PCD) and degeneration, and pollen development in anthers. The sequence is that of PHD finger protein PERSISTENT TAPETAL CELL 1 from Oryza sativa subsp. japonica (Rice).